A 458-amino-acid chain; its full sequence is tRNA-2-methylthio-N(6)-dimethylallyladenosine synthase (458 aa).

The 120-residue stretch at 15-134 (KKVFIKTYGC…LPELLEKAKQ (120 aa)) folds into the MTTase N-terminal domain. [4Fe-4S] cluster-binding residues include C24, C60, C97, C175, C179, and C182. Residues 161–395 (RKRGVSAFLT…LLLEQQNTFL (235 aa)) enclose the Radical SAM core domain. A TRAM domain is found at 396-457 (RSKIGQKTDV…SNSFVGEMTN (62 aa)).

Belongs to the methylthiotransferase family. MiaB subfamily. Monomer. Requires [4Fe-4S] cluster as cofactor.

The protein resides in the cytoplasm. It catalyses the reaction N(6)-dimethylallyladenosine(37) in tRNA + (sulfur carrier)-SH + AH2 + 2 S-adenosyl-L-methionine = 2-methylsulfanyl-N(6)-dimethylallyladenosine(37) in tRNA + (sulfur carrier)-H + 5'-deoxyadenosine + L-methionine + A + S-adenosyl-L-homocysteine + 2 H(+). Catalyzes the methylthiolation of N6-(dimethylallyl)adenosine (i(6)A), leading to the formation of 2-methylthio-N6-(dimethylallyl)adenosine (ms(2)i(6)A) at position 37 in tRNAs that read codons beginning with uridine. The protein is tRNA-2-methylthio-N(6)-dimethylallyladenosine synthase of Bartonella tribocorum (strain CIP 105476 / IBS 506).